The following is an 860-amino-acid chain: Leucine--tRNA ligase (860 aa).

Residues Pro-42–His-52 carry the 'HIGH' region motif. The 'KMSKS' region signature appears at Lys-619 to Ser-623. Lys-622 is an ATP binding site.

It belongs to the class-I aminoacyl-tRNA synthetase family.

The protein localises to the cytoplasm. The enzyme catalyses tRNA(Leu) + L-leucine + ATP = L-leucyl-tRNA(Leu) + AMP + diphosphate. The polypeptide is Leucine--tRNA ligase (Escherichia coli O9:H4 (strain HS)).